We begin with the raw amino-acid sequence, 101 residues long: NADH-quinone oxidoreductase subunit K (101 aa).

Helical transmembrane passes span 4–24 (LSHY…GIFL), 30–50 (IVLL…FIAF), and 61–81 (VFVF…LAIL).

This sequence belongs to the complex I subunit 4L family. NDH-1 is composed of 14 different subunits. Subunits NuoA, H, J, K, L, M, N constitute the membrane sector of the complex.

It is found in the cell inner membrane. The enzyme catalyses a quinone + NADH + 5 H(+)(in) = a quinol + NAD(+) + 4 H(+)(out). Its function is as follows. NDH-1 shuttles electrons from NADH, via FMN and iron-sulfur (Fe-S) centers, to quinones in the respiratory chain. The immediate electron acceptor for the enzyme in this species is believed to be ubiquinone. Couples the redox reaction to proton translocation (for every two electrons transferred, four hydrogen ions are translocated across the cytoplasmic membrane), and thus conserves the redox energy in a proton gradient. This chain is NADH-quinone oxidoreductase subunit K, found in Methylovorus glucosotrophus (strain SIP3-4).